Here is a 215-residue protein sequence, read N- to C-terminus: High mobility group protein B1 (215 aa).

2–10 (GKGDPKKPR) is a binding site for heparin. The interval 2–97 (GKGDPKKPRG…KFKDPNAPKR (96 aa)) is sufficient for interaction with HAVCR2. N6-acetyllysine is present on residues K3, K7, K8, and K12. An LPS binding (delipidated) region spans residues 3–15 (KGDPKKPRGKMSS). The HMG box 1 DNA-binding region spans 9–79 (PRGKMSSYAF…RYEREMKTYI (71 aa)). Cysteine sulfonic acid (-SO3H); alternate is present on C23. A disulfide bond links C23 and C45. Positions 27–43 (HKKKHPDASVNFSEFSK) match the Nuclear localization signal (NLS) 1 motif. An N6-acetyllysine mark is found at K28, K29, and K30. An Isoglutamyl lysine isopeptide (Lys-Gln) (interchain with Q-?) cross-link involves residue K28. Position 35 is a phosphoserine (S35). K43 bears the N6-acetyllysine mark. Isoglutamyl lysine isopeptide (Lys-Gln) (interchain with Q-?) cross-links involve residues K43 and K44. Position 45 is a cysteine sulfonic acid (-SO3H); alternate (C45). Residue K68 forms an Isoglutamyl lysine isopeptide (Lys-Gln) (interchain with Q-?) linkage. The tract at residues 76-95 (KTYIPPKGETKKKFKDPNAP) is disordered. Positions 80-96 (PPKGETKKKFKDPNAPK) are LPS binding (Lipid A). A compositionally biased stretch (basic and acidic residues) spans 83–94 (GETKKKFKDPNA). The cytokine-stimulating activity stretch occupies residues 89–108 (FKDPNAPKRPPSAFFLFCSE). K90 carries the N6-acetyllysine modification. The HMG box 2 DNA-binding region spans 95–163 (PKRPPSAFFL…KYEKDIAAYR (69 aa)). At S100 the chain carries Phosphoserine. The residue at position 106 (C106) is a Cysteine sulfonic acid (-SO3H). An N6-acetyllysine mark is found at K127, K128, K141, K172, K173, K177, and K180. The interval 150–183 (KLKEKYEKDIAAYRAKGKPDAAKKGVVKAEKSKK) is binding to AGER/RAGE. The span at 161–179 (AYRAKGKPDAAKKGVVKAE) shows a compositional bias: basic and acidic residues. A disordered region spans residues 161–215 (AYRAKGKPDAAKKGVVKAEKSKKKKEEEEDEEDEEDEEEEEDEEDEEEEEDDDDE). The Nuclear localization signal (NLS) 2 motif lies at 178-184 (AEKSKKK). K180 is covalently cross-linked (Isoglutamyl lysine isopeptide (Lys-Gln) (interchain with Q-?)). S181 is subject to ADP-ribosylserine. An N6-acetyllysine mark is found at K182, K183, K184, and K185. Isoglutamyl lysine isopeptide (Lys-Gln) (interchain with Q-?) cross-links involve residues K182, K183, and K184. Residues 187-215 (EEEDEEDEEDEEEEEDEEDEEEEEDDDDE) are compositionally biased toward acidic residues.

Belongs to the HMGB family. As to quaternary structure, interacts (fully reduced HMGB1) with CXCL12; probably in a 1:2 ratio involving two molecules of CXCL12, each interacting with one HMG box of HMGB1; inhibited by glycyrrhizin. Associates with the TLR4:LY96 receptor complex. Component of the RAG complex composed of core components RAG1 and RAG2, and associated component HMGB1 or HMGB2. Interacts (in cytoplasm upon starvation) with BECN1; inhibits the interaction of BECN1 and BCL2 leading to promotion of autophagy. Interacts with KPNA1; involved in nuclear import. Interacts with AGER. Interacts with SREBF1, TLR2, TLR4, TLR9, PTPRZ1, APEX1, FEN1, POLB, TERT. Interacts with IL1B, MSH2, XPA, XPC, HNF1A, TP53. Interacts with CD24; the probable CD24:SIGLEC10 complex is proposed to inhibit HGMB1-mediated tissue damage immune response. Interacts with THBD; prevents HGMB1 interaction with ACER/RAGE and inhibits HGMB1 pro-inflammatory activity. Interacts with HAVCR2; impairs HMGB1 binding to B-DNA and likely HMGB1-mediated innate immune response. Interacts with XPO1; mediating nuclear export. Interacts with receptor RAGE/AGER. Post-translationally, phosphorylated at serine residues. Phosphorylation in both NLS regions is required for cytoplasmic translocation followed by secretion. In terms of processing, acetylated on multiple sites upon stimulation with LPS. Acetylation on lysine residues in the nuclear localization signals (NLS 1 and NLS 2) leads to cytoplasmic localization and subsequent secretion. Acetylation on Lys-3 results in preferential binding to DNA ends and impairs DNA bending activity. Reduction/oxidation of cysteine residues Cys-23, Cys-45 and Cys-106 and a possible intramolecular disulfide bond involving Cys-23 and Cys-45 give rise to different redox forms with specific functional activities in various cellular compartments: 1- fully reduced HMGB1 (HMGB1C23hC45hC106h), 2- disulfide HMGB1 (HMGB1C23-C45C106h) and 3- sulfonyl HMGB1 (HMGB1C23soC45soC106so). Post-translationally, poly-ADP-ribosylated by PARP1 when secreted following stimulation with LPS. In terms of processing, in vitro cleavage by CASP1 is liberating a HMG box 1-containing peptide which may mediate immunogenic activity; the peptide antagonizes apoptosis-induced immune tolerance. Can be proteolytically cleaved by a thrombin:thrombomodulin complex; reduces binding to heparin and pro-inflammatory activities. Forms covalent cross-links mediated by transglutaminase TGM2, between a glutamine and the epsilon-amino group of a lysine residue, forming homopolymers and heteropolymers.

The protein localises to the nucleus. Its subcellular location is the chromosome. It localises to the cytoplasm. The protein resides in the secreted. It is found in the cell membrane. The protein localises to the endosome. Its subcellular location is the endoplasmic reticulum-Golgi intermediate compartment. Multifunctional redox sensitive protein with various roles in different cellular compartments. In the nucleus is one of the major chromatin-associated non-histone proteins and acts as a DNA chaperone involved in replication, transcription, chromatin remodeling, V(D)J recombination, DNA repair and genome stability. Proposed to be an universal biosensor for nucleic acids. Promotes host inflammatory response to sterile and infectious signals and is involved in the coordination and integration of innate and adaptive immune responses. In the cytoplasm functions as a sensor and/or chaperone for immunogenic nucleic acids implicating the activation of TLR9-mediated immune responses, and mediates autophagy. Acts as a danger-associated molecular pattern (DAMP) molecule that amplifies immune responses during tissue injury. Released to the extracellular environment can bind DNA, nucleosomes, IL-1 beta, CXCL12, AGER isoform 2/sRAGE, lipopolysaccharide (LPS) and lipoteichoic acid (LTA), and activates cells through engagement of multiple surface receptors. In the extracellular compartment fully reduced HMGB1 (released by necrosis) acts as a chemokine, disulfide HMGB1 (actively secreted) as a cytokine, and sulfonyl HMGB1 (released from apoptotic cells) promotes immunological tolerance. Has proangiogenic activity. May be involved in platelet activation. Binds to phosphatidylserine and phosphatidylethanolamide. Bound to RAGE mediates signaling for neuronal outgrowth. May play a role in accumulation of expanded polyglutamine (polyQ) proteins. Functionally, nuclear functions are attributed to fully reduced HGMB1. Associates with chromatin and binds DNA with a preference to non-canonical DNA structures such as single-stranded DNA, DNA-containing cruciforms or bent structures, supercoiled DNA and ZDNA. Can bent DNA and enhance DNA flexibility by looping thus providing a mechanism to promote activities on various gene promoters by enhancing transcription factor binding and/or bringing distant regulatory sequences into close proximity. May be involved in nucleotide excision repair (NER), mismatch repair (MMR) and base excision repair (BER) pathways, and double strand break repair such as non-homologous end joining (NHEJ). Involved in V(D)J recombination by acting as a cofactor of the RAG complex: acts by stimulating cleavage and RAG protein binding at the 23 bp spacer of conserved recombination signal sequences (RSS). In vitro can displace histone H1 from highly bent DNA. Can restructure the canonical nucleosome leading to relaxation of structural constraints for transcription factor-binding. Enhances binding of sterol regulatory element-binding proteins (SREBPs) such as SREBF1 to their cognate DNA sequences and increases their transcriptional activities. Facilitates binding of TP53 to DNA. May be involved in mitochondrial quality control and autophagy in a transcription-dependent fashion implicating HSPB1. Can modulate the activity of the telomerase complex and may be involved in telomere maintenance. In terms of biological role, in the cytoplasm proposed to dissociate the BECN1:BCL2 complex via competitive interaction with BECN1 leading to autophagy activation. Involved in oxidative stress-mediated autophagy. Can protect BECN1 and ATG5 from calpain-mediated cleavage and thus proposed to control their proautophagic and proapoptotic functions and to regulate the extent and severity of inflammation-associated cellular injury. In myeloid cells has a protective role against endotoxemia and bacterial infection by promoting autophagy. Involved in endosomal translocation and activation of TLR9 in response to CpG-DNA in macrophages. Its function is as follows. In the extracellular compartment (following either active secretion or passive release)involved in regulation of the inflammatory response. Fully reduced HGMB1 (which subsequently gets oxidized after release) in association with CXCL12 mediates the recruitment of inflammatory cells during the initial phase of tissue injury; the CXCL12:HMGB1 complex triggers CXCR4 homodimerization. Induces the migration of monocyte-derived immature dendritic cells and seems to regulate adhesive and migratory functions of neutrophils implicating AGER/RAGE and ITGAM. Can bind to various types of DNA and RNA including microbial unmethylated CpG-DNA to enhance the innate immune response to nucleic acids. Proposed to act in promiscuous DNA/RNA sensing which cooperates with subsequent discriminative sensing by specific pattern recognition receptors. Promotes extracellular DNA-induced AIM2 inflammasome activation implicating AGER/RAGE. Disulfide HMGB1 binds to transmembrane receptors, such as AGER/RAGE, TLR2, TLR4 and probably TREM1, thus activating their signal transduction pathways. Mediates the release of cytokines/chemokines such as TNF, IL-1, IL-6, IL-8, CCL2, CCL3, CCL4 and CXCL10. Promotes secretion of interferon-gamma by macrophage-stimulated natural killer (NK) cells in concert with other cytokines like IL-2 or IL-12. TLR4 is proposed to be the primary receptor promoting macrophage activation and signaling through TLR4 seems to implicate LY96/MD-2. In bacterial LPS- or LTA-mediated inflammatory responses binds to the endotoxins and transfers them to CD14 for signaling to the respective TLR4:LY96 and TLR2 complexes. Contributes to tumor proliferation by association with ACER/RAGE. Can bind to IL1-beta and signals through the IL1R1:IL1RAP receptor complex. Binding to class A CpG activates cytokine production in plasmacytoid dendritic cells implicating TLR9, MYD88 and AGER/RAGE and can activate autoreactive B cells. Via HMGB1-containing chromatin immune complexes may also promote B cell responses to endogenous TLR9 ligands through a B-cell receptor (BCR)-dependent and ACER/RAGE-independent mechanism. Inhibits phagocytosis of apoptotic cells by macrophages; the function is dependent on poly-ADP-ribosylation and involves binding to phosphatidylserine on the cell surface of apoptotic cells. In adaptive immunity may be involved in enhancing immunity through activation of effector T-cells and suppression of regulatory T (TReg) cells. In contrast, without implicating effector or regulatory T-cells, required for tumor infiltration and activation of T-cells expressing the lymphotoxin LTA:LTB heterotrimer thus promoting tumor malignant progression. Also reported to limit proliferation of T-cells. Released HMGB1:nucleosome complexes formed during apoptosis can signal through TLR2 to induce cytokine production. Involved in induction of immunological tolerance by apoptotic cells; its pro-inflammatory activities when released by apoptotic cells are neutralized by reactive oxygen species (ROS)-dependent oxidation specifically on Cys-106. During macrophage activation by activated lymphocyte-derived self apoptotic DNA (ALD-DNA) promotes recruitment of ALD-DNA to endosomes. The sequence is that of High mobility group protein B1 (HMGB1) from Bos taurus (Bovine).